The sequence spans 451 residues: Tubulin alpha chain (451 aa).

Glutamine 11 lines the GTP pocket. N6-acetyllysine is present on lysine 40. GTP-binding residues include glutamate 71, glycine 144, threonine 145, threonine 179, asparagine 206, and asparagine 228. Residue glutamate 71 coordinates Mg(2+). Glutamate 254 is a catalytic residue.

The protein belongs to the tubulin family. Dimer of alpha and beta chains. A typical microtubule is a hollow water-filled tube with an outer diameter of 25 nm and an inner diameter of 15 nM. Alpha-beta heterodimers associate head-to-tail to form protofilaments running lengthwise along the microtubule wall with the beta-tubulin subunit facing the microtubule plus end conferring a structural polarity. Microtubules usually have 13 protofilaments but different protofilament numbers can be found in some organisms and specialized cells. It depends on Mg(2+) as a cofactor. Post-translationally, undergoes a tyrosination/detyrosination cycle, the cyclic removal and re-addition of a C-terminal tyrosine residue by the enzymes tubulin tyrosine carboxypeptidase (TTCP) and tubulin tyrosine ligase (TTL), respectively. Acetylation of alpha chains at Lys-40 stabilizes microtubules and affects affinity and processivity of microtubule motors. This modification has a role in multiple cellular functions, ranging from cell motility, cell cycle progression or cell differentiation to intracellular trafficking and signaling.

It localises to the cytoplasm. The protein localises to the cytoskeleton. It carries out the reaction GTP + H2O = GDP + phosphate + H(+). Functionally, tubulin is the major constituent of microtubules, a cylinder consisting of laterally associated linear protofilaments composed of alpha- and beta-tubulin heterodimers. Microtubules grow by the addition of GTP-tubulin dimers to the microtubule end, where a stabilizing cap forms. Below the cap, tubulin dimers are in GDP-bound state, owing to GTPase activity of alpha-tubulin. The chain is Tubulin alpha chain (TUBA) from Chlorella vulgaris (Green alga).